A 199-amino-acid polypeptide reads, in one-letter code: Patulin biosynthesis cluster protein F (199 aa).

A signal peptide spans 1 to 21 (MKSSLWVSLAVSLIGLGPAAA). N-linked (GlcNAc...) asparagine glycans are attached at residues asparagine 129 and asparagine 183.

This sequence belongs to the patF family.

The protein resides in the cytoplasm. Its subcellular location is the cytosol. The enzyme catalyses phyllostine = neopatulin. The protein operates within mycotoxin biosynthesis; patulin biosynthesis. Part of the gene cluster that mediates the biosynthesis of patulin, an acetate-derived tetraketide mycotoxin produced by several fungal species that shows antimicrobial properties against several bacteria. PatF catalyzes the conversion of phyllostine into neopatulin. The pathway begins with the synthesis of 6-methylsalicylic acid by the polyketide synthase (PKS) patK via condensation of acetate and malonate units. The 6-methylsalicylic acid decarboxylase patG then catalyzes the decarboxylation of 6-methylsalicylic acid to yield m-cresol (also known as 3-methylphenol). These first reactions occur in the cytosol. The intermediate m-cresol is then transported into the endoplasmic reticulum where the cytochrome P450 monooxygenase patH converts it to m-hydroxybenzyl alcohol, which is further converted to gentisyl alcohol by the cytochrome P450 monooxygenase patI. The oxidoreductases patJ and patO further convert gentisyl alcohol to isoepoxydon in the vacuole. PatN catalyzes then the transformation of isoepoxydon into phyllostine. The cluster protein patF is responsible for the conversion from phyllostine to neopatulin whereas the alcohol dehydrogenase patD converts neopatulin to E-ascladiol. The steps between isoepoxydon and E-ascladiol occur in the cytosol, and E-ascladiol is probably secreted to the extracellular space by one of the cluster-specific transporters patC or patM. Finally, the secreted patulin synthase patE catalyzes the conversion of E-ascladiol to patulin. This chain is Patulin biosynthesis cluster protein F, found in Penicillium expansum (Blue mold rot fungus).